The primary structure comprises 360 residues: Phospho-N-acetylmuramoyl-pentapeptide-transferase (360 aa).

10 helical membrane-spanning segments follow: residues 27 to 47 (IVSL…MIAW), 73 to 93 (TMGG…WANL), 94 to 114 (SNPY…VGFV), 132 to 152 (WKYF…YSIG), 168 to 188 (VMPQ…VGTS), 199 to 219 (GLAI…AWAT), 236 to 256 (ASEL…FLWF), 263 to 283 (VFMG…IAVL), 288 to 308 (FLLV…ILQV), and 338 to 358 (VIVR…ATLK).

This sequence belongs to the glycosyltransferase 4 family. MraY subfamily. The cofactor is Mg(2+).

It localises to the cell inner membrane. The catalysed reaction is UDP-N-acetyl-alpha-D-muramoyl-L-alanyl-gamma-D-glutamyl-meso-2,6-diaminopimeloyl-D-alanyl-D-alanine + di-trans,octa-cis-undecaprenyl phosphate = di-trans,octa-cis-undecaprenyl diphospho-N-acetyl-alpha-D-muramoyl-L-alanyl-D-glutamyl-meso-2,6-diaminopimeloyl-D-alanyl-D-alanine + UMP. It functions in the pathway cell wall biogenesis; peptidoglycan biosynthesis. Functionally, catalyzes the initial step of the lipid cycle reactions in the biosynthesis of the cell wall peptidoglycan: transfers peptidoglycan precursor phospho-MurNAc-pentapeptide from UDP-MurNAc-pentapeptide onto the lipid carrier undecaprenyl phosphate, yielding undecaprenyl-pyrophosphoryl-MurNAc-pentapeptide, known as lipid I. The chain is Phospho-N-acetylmuramoyl-pentapeptide-transferase from Pectobacterium atrosepticum (strain SCRI 1043 / ATCC BAA-672) (Erwinia carotovora subsp. atroseptica).